Reading from the N-terminus, the 84-residue chain is Cytochrome b559 subunit alpha (84 aa).

Residues 22–36 form a helical membrane-spanning segment; the sequence is VIHSITIPALFVAGW. Residue His24 coordinates heme.

It belongs to the PsbE/PsbF family. As to quaternary structure, heterodimer of an alpha subunit and a beta subunit. PSII is composed of 1 copy each of membrane proteins PsbA, PsbB, PsbC, PsbD, PsbE, PsbF, PsbH, PsbI, PsbJ, PsbK, PsbL, PsbM, PsbT, PsbX, PsbY, PsbZ, Psb30/Ycf12, at least 3 peripheral proteins of the oxygen-evolving complex and a large number of cofactors. It forms dimeric complexes. Heme b is required as a cofactor.

It localises to the plastid. The protein resides in the chloroplast thylakoid membrane. In terms of biological role, this b-type cytochrome is tightly associated with the reaction center of photosystem II (PSII). PSII is a light-driven water:plastoquinone oxidoreductase that uses light energy to abstract electrons from H(2)O, generating O(2) and a proton gradient subsequently used for ATP formation. It consists of a core antenna complex that captures photons, and an electron transfer chain that converts photonic excitation into a charge separation. This chain is Cytochrome b559 subunit alpha, found in Porphyra purpurea (Red seaweed).